We begin with the raw amino-acid sequence, 214 residues long: Small ribosomal subunit protein eS6 (214 aa).

It belongs to the eukaryotic ribosomal protein eS6 family.

In Saccharolobus islandicus (strain L.S.2.15 / Lassen #1) (Sulfolobus islandicus), this protein is Small ribosomal subunit protein eS6.